Consider the following 339-residue polypeptide: Ketol-acid reductoisomerase (NADP(+)) (339 aa).

One can recognise a KARI N-terminal Rossmann domain in the interval 1–182; sequence MRVYYDRDAD…GGGRSGIIET (182 aa). NADP(+)-binding positions include 24–27, Arg-48, Ser-51, Thr-53, and 83–86; these read YGSQ and DEHQ. The active site involves His-108. Residue Gly-134 participates in NADP(+) binding. The KARI C-terminal knotted domain occupies 183–328; it reads NFREECETDL…ARLRGMMPWI (146 aa). Residues Asp-191, Glu-195, Glu-227, and Glu-231 each contribute to the Mg(2+) site. Ser-252 lines the substrate pocket.

This sequence belongs to the ketol-acid reductoisomerase family. Mg(2+) serves as cofactor.

The catalysed reaction is (2R)-2,3-dihydroxy-3-methylbutanoate + NADP(+) = (2S)-2-acetolactate + NADPH + H(+). The enzyme catalyses (2R,3R)-2,3-dihydroxy-3-methylpentanoate + NADP(+) = (S)-2-ethyl-2-hydroxy-3-oxobutanoate + NADPH + H(+). Its pathway is amino-acid biosynthesis; L-isoleucine biosynthesis; L-isoleucine from 2-oxobutanoate: step 2/4. It participates in amino-acid biosynthesis; L-valine biosynthesis; L-valine from pyruvate: step 2/4. Involved in the biosynthesis of branched-chain amino acids (BCAA). Catalyzes an alkyl-migration followed by a ketol-acid reduction of (S)-2-acetolactate (S2AL) to yield (R)-2,3-dihydroxy-isovalerate. In the isomerase reaction, S2AL is rearranged via a Mg-dependent methyl migration to produce 3-hydroxy-3-methyl-2-ketobutyrate (HMKB). In the reductase reaction, this 2-ketoacid undergoes a metal-dependent reduction by NADPH to yield (R)-2,3-dihydroxy-isovalerate. This is Ketol-acid reductoisomerase (NADP(+)) from Caulobacter vibrioides (strain ATCC 19089 / CIP 103742 / CB 15) (Caulobacter crescentus).